Consider the following 1050-residue polypeptide: Atrial natriuretic peptide receptor 2 (1050 aa).

An N-terminal signal peptide occupies residues 1 to 19 (MDLGHSLFVVFTCFLMARC). Residues 20–460 (RTEIGKNITV…FCNEDQLPVL (441 aa)) lie on the Extracellular side of the membrane. Asparagine 26 and asparagine 74 each carry an N-linked (GlcNAc...) asparagine glycan. Residues cysteine 84 and cysteine 110 are joined by a disulfide bond. N-linked (GlcNAc...) asparagine glycosylation is found at asparagine 169, asparagine 203, asparagine 285, asparagine 352, asparagine 366, and asparagine 415. Residues cysteine 236 and cysteine 339 are joined by a disulfide bond. The chain crosses the membrane as a helical span at residues 461 to 481 (GIVAVGSGLALIIFGISSFLI). At 482-1050 (YRKLKLEKEL…LGEKTDVYVI (569 aa)) the chain is on the cytoplasmic side. A Protein kinase domain is found at 517 to 790 (SRLTISQRGS…PDFSYIKIFV (274 aa)). Positions 865 to 995 (TIYFSDIVGF…DTVNTASRME (131 aa)) constitute a Guanylate cyclase domain.

It belongs to the adenylyl cyclase class-4/guanylyl cyclase family. Post-translationally, phosphorylated. Phosphorylation of the protein kinase-like domain is required for full activation by CNP. Glycosylated. High levels found in liver, atrium and gill. Moderate levels found in brain and ventricle, and low levels in esophageal sphincter, stomach, posterior intestine and kidney.

It is found in the cell membrane. It catalyses the reaction GTP = 3',5'-cyclic GMP + diphosphate. Receptor for the C-type natriuretic peptide NPPC/CNP hormone. Has guanylate cyclase activity upon binding of its ligand. May play a role in the regulation of skeletal growth. The sequence is that of Atrial natriuretic peptide receptor 2 (npr2) from Anguilla japonica (Japanese eel).